A 459-amino-acid chain; its full sequence is ADP-specific phosphofructokinase (459 aa).

The ADPK domain occupies 1–457 (MMEFLKDFQK…FASYLSLLKR (457 aa)). Residues E268, E298, and D441 each contribute to the Mg(2+) site. The Proton acceptor role is filled by D441.

The protein belongs to the carbohydrate kinase PfkC family. Mg(2+) is required as a cofactor.

It is found in the cytoplasm. It carries out the reaction beta-D-fructose 6-phosphate + ADP = beta-D-fructose 1,6-bisphosphate + AMP + H(+). It functions in the pathway carbohydrate degradation; glycolysis. Its function is as follows. Catalyzes the phosphorylation of fructose 6-phosphate to fructose 1,6-bisphosphate using ADP as the phosphate donor. The sequence is that of ADP-specific phosphofructokinase from Thermococcus litoralis.